A 341-amino-acid chain; its full sequence is UDP-N-acetylenolpyruvoylglucosamine reductase (341 aa).

Residues 15–185 (LAQSCADLVE…TAVGLRLVKR (171 aa)) enclose the FAD-binding PCMH-type domain. Residue Arg-161 is part of the active site. The active-site Proton donor is Ser-231. Glu-327 is a catalytic residue.

This sequence belongs to the MurB family. The cofactor is FAD.

The protein localises to the cytoplasm. It carries out the reaction UDP-N-acetyl-alpha-D-muramate + NADP(+) = UDP-N-acetyl-3-O-(1-carboxyvinyl)-alpha-D-glucosamine + NADPH + H(+). The protein operates within cell wall biogenesis; peptidoglycan biosynthesis. Functionally, cell wall formation. The chain is UDP-N-acetylenolpyruvoylglucosamine reductase from Shewanella baltica (strain OS195).